Consider the following 989-residue polypeptide: Bifunctional glutamine synthetase adenylyltransferase/adenylyl-removing enzyme (989 aa).

Residues 1 to 473 (MRGPLEPDSA…HYANLFEDVA (473 aa)) form an adenylyl removase region. The tract at residues 479-989 (DADLMFPPDE…FERILETAAE (511 aa)) is adenylyl transferase.

The protein belongs to the GlnE family. It depends on Mg(2+) as a cofactor.

It catalyses the reaction [glutamine synthetase]-O(4)-(5'-adenylyl)-L-tyrosine + phosphate = [glutamine synthetase]-L-tyrosine + ADP. The enzyme catalyses [glutamine synthetase]-L-tyrosine + ATP = [glutamine synthetase]-O(4)-(5'-adenylyl)-L-tyrosine + diphosphate. Involved in the regulation of glutamine synthetase GlnA, a key enzyme in the process to assimilate ammonia. When cellular nitrogen levels are high, the C-terminal adenylyl transferase (AT) inactivates GlnA by covalent transfer of an adenylyl group from ATP to specific tyrosine residue of GlnA, thus reducing its activity. Conversely, when nitrogen levels are low, the N-terminal adenylyl removase (AR) activates GlnA by removing the adenylyl group by phosphorolysis, increasing its activity. The regulatory region of GlnE binds the signal transduction protein PII (GlnB) which indicates the nitrogen status of the cell. The polypeptide is Bifunctional glutamine synthetase adenylyltransferase/adenylyl-removing enzyme (Xanthobacter autotrophicus (strain ATCC BAA-1158 / Py2)).